Consider the following 224-residue polypeptide: Uridylate kinase (224 aa).

ATP is bound at residue 8–12 (KITGK). Gly-43 contributes to the UMP binding site. Residues Gly-44 and Arg-48 each coordinate ATP. UMP-binding positions include Asp-66 and 114-120 (LIPGQST). ATP is bound by residues Ser-140, Tyr-146, and Asp-149.

Belongs to the UMP kinase family. Homohexamer.

The protein resides in the cytoplasm. It carries out the reaction UMP + ATP = UDP + ADP. It participates in pyrimidine metabolism; CTP biosynthesis via de novo pathway; UDP from UMP (UMPK route): step 1/1. With respect to regulation, inhibited by UTP. Functionally, catalyzes the reversible phosphorylation of UMP to UDP. The protein is Uridylate kinase of Staphylothermus marinus (strain ATCC 43588 / DSM 3639 / JCM 9404 / F1).